Reading from the N-terminus, the 382-residue chain is Mannitol-1-phosphate 5-dehydrogenase (382 aa).

3–14 serves as a coordination point for NAD(+); that stretch reads ALHFGAGNIGRG.

Belongs to the mannitol dehydrogenase family.

It carries out the reaction D-mannitol 1-phosphate + NAD(+) = beta-D-fructose 6-phosphate + NADH + H(+). The protein is Mannitol-1-phosphate 5-dehydrogenase of Pectobacterium atrosepticum (strain SCRI 1043 / ATCC BAA-672) (Erwinia carotovora subsp. atroseptica).